We begin with the raw amino-acid sequence, 195 residues long: Segregation and condensation protein B (195 aa).

The protein belongs to the ScpB family. As to quaternary structure, homodimer. Homodimerization may be required to stabilize the binding of ScpA to the Smc head domains. Component of a cohesin-like complex composed of ScpA, ScpB and the Smc homodimer, in which ScpA and ScpB bind to the head domain of Smc. The presence of the three proteins is required for the association of the complex with DNA.

The protein resides in the cytoplasm. In terms of biological role, participates in chromosomal partition during cell division. May act via the formation of a condensin-like complex containing Smc and ScpA that pull DNA away from mid-cell into both cell halves. This chain is Segregation and condensation protein B, found in Clostridium perfringens (strain ATCC 13124 / DSM 756 / JCM 1290 / NCIMB 6125 / NCTC 8237 / Type A).